Here is a 235-residue protein sequence, read N- to C-terminus: uncharacterized protein (235 aa).

Positions 2 to 69 constitute an S4 RNA-binding domain; the sequence is CRLAKIISNA…KPRLWIYYKP (68 aa). The Nucleophile role is filled by Asp-102.

Belongs to the pseudouridine synthase RsuA family.

The enzyme catalyses a uridine in RNA = a pseudouridine in RNA. This is an uncharacterized protein from Rickettsia prowazekii (strain Madrid E).